Here is a 293-residue protein sequence, read N- to C-terminus: Ribosomal protein L11 methyltransferase (293 aa).

Residues Thr145, Gly166, Asp188, and Asn230 each coordinate S-adenosyl-L-methionine.

It belongs to the methyltransferase superfamily. PrmA family.

The protein resides in the cytoplasm. The catalysed reaction is L-lysyl-[protein] + 3 S-adenosyl-L-methionine = N(6),N(6),N(6)-trimethyl-L-lysyl-[protein] + 3 S-adenosyl-L-homocysteine + 3 H(+). Functionally, methylates ribosomal protein L11. This Escherichia coli O81 (strain ED1a) protein is Ribosomal protein L11 methyltransferase.